A 350-amino-acid chain; its full sequence is MDFDLEPSLEELIKQDTLKWIFVGGKGGVGKTTTSSSIAVQLALQHPNDEFLLISTDPAHNLSDAFCQKFGKDARKVEGLSNLSCMEIDPEAAMSDLQQQAQQYNNDPNDPLKSIMNDMTGSIPGIDEALSFMEVLKHIKNQKVNESDDSTDKISYRTIIFDTAPTGHTLRFLQLPSTLQKLLGKFQQLSGKLGPMMSMLGGGGQGQQDMFAKLNEVQKNVEEVNEQFTNPDLTTFVCVCISEFLSLYETERMIQELMSYQMDVNSIVVNQLLFADDDENPCKRCVARWKMQKKYLDQMAELYEDYHLVKMPLLGSEIRGVENLKRFSKFLIKPYDPKVDRAIITEMKEQ.

Residue 26–33 coordinates ATP; it reads KGGVGKTT. The active site involves Asp-57. ATP contacts are provided by Glu-243 and Asn-270. The Zn(2+) site is built by Cys-282 and Cys-285.

Belongs to the arsA ATPase family. As to quaternary structure, homodimer. Component of the Golgi to ER traffic (GET) complex, which is composed of GET1, GET2 and GET3. Within the complex, GET1 and GET2 form a heterotetramer which is stabilized by phosphatidylinositol binding and which binds to the GET3 homodimer. Interacts with the chloride channel protein GEF1.

It is found in the cytoplasm. Its subcellular location is the endoplasmic reticulum. It localises to the golgi apparatus. In terms of biological role, ATPase required for the post-translational delivery of tail-anchored (TA) proteins to the endoplasmic reticulum. Recognizes and selectively binds the transmembrane domain of TA proteins in the cytosol. This complex then targets to the endoplasmic reticulum by membrane-bound receptors GET1 and GET2, where the tail-anchored protein is released for insertion. This process is regulated by ATP binding and hydrolysis. ATP binding drives the homodimer towards the closed dimer state, facilitating recognition of newly synthesized TA membrane proteins. ATP hydrolysis is required for insertion. Subsequently, the homodimer reverts towards the open dimer state, lowering its affinity for the GET1-GET2 receptor, and returning it to the cytosol to initiate a new round of targeting. Cooperates with the HDEL receptor ERD2 to mediate the ATP-dependent retrieval of resident ER proteins that contain a C-terminal H-D-E-L retention signal from the Golgi to the ER. Involved in low-level resistance to the oxyanions arsenite and arsenate, and in heat tolerance. In Candida dubliniensis (strain CD36 / ATCC MYA-646 / CBS 7987 / NCPF 3949 / NRRL Y-17841) (Yeast), this protein is ATPase GET3.